Consider the following 351-residue polypeptide: Cyclic AMP-dependent transcription factor ATF-4 (351 aa).

K53 participates in a covalent cross-link: Glycyl lysine isopeptide (Lys-Gly) (interchain with G-Cter in SUMO2). The tract at residues 210-268 (EEDTPSDNDSGICMSPESYLGSPQHSPSTRGSPNRSLPSPGVLCGSARPKPYDPPGEKM) is disordered. Residue T213 is modified to Phosphothreonine. S215 bears the Phosphoserine; by CK2 mark. The short motif at 215–224 (SDNDSGICMS) is the BetaTrCP degron motif element. Residues S219, S224, S231, and S235 each carry the phosphoserine modification. The segment covering 230 to 246 (GSPQHSPSTRGSPNRSL) has biased composition (polar residues). 4-hydroxyproline is present on P236. S245 is subject to Phosphoserine; by RPS6KA3. A Phosphoserine modification is found at S248. Residues K259, K267, and K272 each participate in a glycyl lysine isopeptide (Lys-Gly) (interchain with G-Cter in SUMO2) cross-link. Residues 278–341 (LDKKLKKMEQ…QYLKDLIEEV (64 aa)) form the bZIP domain. A basic motif region spans residues 280-300 (KKLKKMEQNKTAATRYRQKKR). A coiled-coil region spans residues 280 to 340 (KKLKKMEQNK…IQYLKDLIEE (61 aa)). The tract at residues 305-341 (ALTGECKELEKKNEALKERADSLAKEIQYLKDLIEEV) is interaction with GABBR1. Positions 306-334 (LTGECKELEKKNEALKERADSLAKEIQYL) are leucine-zipper. The residue at position 311 (K311) is an N6-acetyllysine.

Belongs to the bZIP family. In terms of assembly, binds DNA as a homodimer and as a heterodimer. Heterodimer; heterodimerizes with CEBPB. Heterodimer; heterodimerizes with DDIT3/CHOP. Interacts with CEP290 (via an N-terminal region). Interacts with NEK6, DAPK2 (isoform 2) and ZIPK/DAPK3. Interacts (via its leucine zipper domain) with GABBR1 and GABBR2 (via their C-termini). Forms a heterodimer with TXLNG in osteoblasts. Interacts (via its DNA binding domain) with FOXO1 (C-terminal half); the interaction occurs in osteoblasts and regulates glucose homeostasis through suppression of beta-cell proliferation and a decrease in insulin production. Interacts with SATB2; the interaction results in enhanced DNA binding and transactivation by these transcription factors. Interacts with ABRAXAS2. Interacts with TRIB3, inhibiting the transactivation activity of ATF4. Interacts with DISC1; which inhibits ATF4 transcription factor activity by disrupting ATF4 dimerization and DNA-binding. Interacts with EP300/p300; EP300/p300 stabilizes ATF4 and increases its transcriptional activity independently of its catalytic activity by preventing its ubiquitination. Ubiquitinated by SCF(BTRC) in response to mTORC1 signal, followed by proteasomal degradation and leading to down-regulate expression of SIRT4. Interaction with EP300/p300 inhibits ubiquitination by SCF(BTRC). In terms of processing, phosphorylation at Ser-245 by RPS6KA3/RSK2 in osteoblasts enhances transactivation activity and promotes osteoblast differentiation. Phosphorylated on the betaTrCP degron motif at Ser-219, followed by phosphorylation at Thr-213, Ser-224, Ser-231, Ser-235 and Ser-248, promoting interaction with BTRC and ubiquitination. Phosphorylation is promoted by mTORC1. Phosphorylation at Ser-215 by CK2 decreases its stability. Phosphorylated by NEK6. Post-translationally, hydroxylated by PHD3, leading to decreased protein stability.

The protein localises to the nucleus. The protein resides in the nucleus speckle. Its subcellular location is the cytoplasm. It is found in the cell membrane. It localises to the cytoskeleton. The protein localises to the microtubule organizing center. The protein resides in the centrosome. Its function is as follows. Transcription factor that binds the cAMP response element (CRE) (consensus: 5'-GTGACGT[AC][AG]-3') and displays two biological functions, as regulator of metabolic and redox processes under normal cellular conditions, and as master transcription factor during integrated stress response (ISR). Binds to asymmetric CRE's as a heterodimer and to palindromic CRE's as a homodimer. Core effector of the ISR, which is required for adaptation to various stress such as endoplasmic reticulum (ER) stress, amino acid starvation, mitochondrial stress or oxidative stress. During ISR, ATF4 translation is induced via an alternative ribosome translation re-initiation mechanism in response to EIF2S1/eIF-2-alpha phosphorylation, and stress-induced ATF4 acts as a master transcription factor of stress-responsive genes in order to promote cell recovery. Promotes the transcription of genes linked to amino acid sufficiency and resistance to oxidative stress to protect cells against metabolic consequences of ER oxidation. Activates the transcription of NLRP1, possibly in concert with other factors in response to ER stress. Activates the transcription of asparagine synthetase (ASNS) in response to amino acid deprivation or ER stress. However, when associated with DDIT3/CHOP, the transcriptional activation of the ASNS gene is inhibited in response to amino acid deprivation. Together with DDIT3/CHOP, mediates programmed cell death by promoting the expression of genes involved in cellular amino acid metabolic processes, mRNA translation and the terminal unfolded protein response (terminal UPR), a cellular response that elicits programmed cell death when ER stress is prolonged and unresolved. Activates the expression of COX7A2L/SCAF1 downstream of the EIF2AK3/PERK-mediated unfolded protein response, thereby promoting formation of respiratory chain supercomplexes and increasing mitochondrial oxidative phosphorylation. Together with DDIT3/CHOP, activates the transcription of the IRS-regulator TRIB3 and promotes ER stress-induced neuronal cell death by regulating the expression of BBC3/PUMA in response to ER stress. May cooperate with the UPR transcriptional regulator QRICH1 to regulate ER protein homeostasis which is critical for cell viability in response to ER stress. In the absence of stress, ATF4 translation is at low levels and it is required for normal metabolic processes such as embryonic lens formation, fetal liver hematopoiesis, bone development and synaptic plasticity. Acts as a regulator of osteoblast differentiation in response to phosphorylation by RPS6KA3/RSK2: phosphorylation in osteoblasts enhances transactivation activity and promotes expression of osteoblast-specific genes and post-transcriptionally regulates the synthesis of Type I collagen, the main constituent of the bone matrix. Cooperates with FOXO1 in osteoblasts to regulate glucose homeostasis through suppression of beta-cell production and decrease in insulin production. Activates transcription of SIRT4. Regulates the circadian expression of the core clock component PER2 and the serotonin transporter SLC6A4. Binds in a circadian time-dependent manner to the cAMP response elements (CRE) in the SLC6A4 and PER2 promoters and periodically activates the transcription of these genes. Mainly acts as a transcriptional activator in cellular stress adaptation, but it can also act as a transcriptional repressor: acts as a regulator of synaptic plasticity by repressing transcription, thereby inhibiting induction and maintenance of long-term memory. Regulates synaptic functions via interaction with DISC1 in neurons, which inhibits ATF4 transcription factor activity by disrupting ATF4 dimerization and DNA-binding. Functionally, (Microbial infection) Binds to a Tax-responsive enhancer element in the long terminal repeat of HTLV-I. The chain is Cyclic AMP-dependent transcription factor ATF-4 from Homo sapiens (Human).